A 62-amino-acid polypeptide reads, in one-letter code: MRLLFLLFLLLVCLAQKTSGRKRNTKFRQCEKMGGICKYQKTHGCSILPAECKSRYKHCCRL.

The N-terminal stretch at 1–20 (MRLLFLLFLLLVCLAQKTSG) is a signal peptide. Cystine bridges form between cysteine 30–cysteine 59, cysteine 37–cysteine 52, and cysteine 45–cysteine 60.

It belongs to the beta-defensin family.

It is found in the secreted. In terms of biological role, has antibacterial activity. This is Beta-defensin 33 (Defb33) from Rattus norvegicus (Rat).